The following is a 99-amino-acid chain: uncharacterized protein (99 aa).

The next 3 helical transmembrane spans lie at 7-29 (FFISYFLPLISFLGLLNLLYTLY), 39-61 (FISSSVVSIFTILFGTMPYARYN), and 68-90 (FCNLMVFVLPVSFFLVSLLLWLL).

It is found in the cell membrane. This is an uncharacterized protein from Archaeoglobus fulgidus (strain ATCC 49558 / DSM 4304 / JCM 9628 / NBRC 100126 / VC-16).